A 198-amino-acid chain; its full sequence is MSYYAFEGLIPVVHPDAFVHPSAVLIGDVIVGAGVYIGPLASLRGDYGRLILEAGSNLQDGCIMHGYCDTDTIVHENGHIGHGAILHGCVVGRDALVGMNSVIMDGAVIGEESIVAAMSFVKAGFQGEARQLLVGSPARVLRQVTDQELHWKHLNTKEYQDLAIRCRTGLSETKPLTQAEENRPRLKGTTDVKPKSAQ.

The disordered stretch occupies residues 174-198 (KPLTQAEENRPRLKGTTDVKPKSAQ). A compositionally biased stretch (basic and acidic residues) spans 180–198 (EENRPRLKGTTDVKPKSAQ).

This sequence belongs to the transferase hexapeptide repeat family.

It functions in the pathway amine and polyamine metabolism; carnitine metabolism. Overproduction of CaiE stimulates the activity of CaiB and CaiD. The polypeptide is Carnitine operon protein CaiE (Salmonella typhimurium (strain LT2 / SGSC1412 / ATCC 700720)).